Reading from the N-terminus, the 51-residue chain is Large ribosomal subunit protein eL39z/eL39x (51 aa).

The tract at residues 1 to 21 (MPSHKSFMIKKKLGKKMRQNR) is disordered. Over residues 7–19 (FMIKKKLGKKMRQ) the composition is skewed to basic residues.

It belongs to the eukaryotic ribosomal protein eL39 family.

The protein is Large ribosomal subunit protein eL39z/eL39x (RPL39A) of Arabidopsis thaliana (Mouse-ear cress).